A 291-amino-acid polypeptide reads, in one-letter code: ATP synthase gamma chain (291 aa).

This sequence belongs to the ATPase gamma chain family. In terms of assembly, F-type ATPases have 2 components, CF(1) - the catalytic core - and CF(0) - the membrane proton channel. CF(1) has five subunits: alpha(3), beta(3), gamma(1), delta(1), epsilon(1). CF(0) has three main subunits: a, b and c.

It is found in the cell inner membrane. In terms of biological role, produces ATP from ADP in the presence of a proton gradient across the membrane. The gamma chain is believed to be important in regulating ATPase activity and the flow of protons through the CF(0) complex. The polypeptide is ATP synthase gamma chain (Methylobacillus flagellatus (strain ATCC 51484 / DSM 6875 / VKM B-1610 / KT)).